The primary structure comprises 598 residues: UvrABC system protein C (598 aa).

The GIY-YIG domain maps to 14-91 (DSPGCYLHKD…IQKNMPKYNI (78 aa)). Residues 196 to 231 (DKIIEDLRSKMLAASEEMAFERAAEYRDLISGIATM) form the UVR domain.

It belongs to the UvrC family. As to quaternary structure, interacts with UvrB in an incision complex.

It is found in the cytoplasm. Its function is as follows. The UvrABC repair system catalyzes the recognition and processing of DNA lesions. UvrC both incises the 5' and 3' sides of the lesion. The N-terminal half is responsible for the 3' incision and the C-terminal half is responsible for the 5' incision. This is UvrABC system protein C from Streptococcus pyogenes serotype M18 (strain MGAS8232).